Reading from the N-terminus, the 295-residue chain is uncharacterized protein (295 aa).

The segment covering 1–13 (MRHSVARPTRLPR) has biased composition (basic residues). 2 disordered regions span residues 1–111 (MRHS…AGLS) and 183–295 (TSAF…PRDS). Residues 57–67 (AGPSAGAAARP) are compositionally biased toward low complexity. A compositionally biased stretch (pro residues) spans 68–77 (AAPPPQPREP). Composition is skewed to basic and acidic residues over residues 245–257 (LRPKGARADDRRP) and 280–295 (GEPHKAGEVGNHPRDS).

This is an uncharacterized protein from Homo sapiens (Human).